A 419-amino-acid chain; its full sequence is MDSPCQPQALNQALPQLPGSVSESLESSRARMGVESYLPCPLLPAYHRPGASGEASAGNGTPRTTATATTTTASPLREGFGGQDGGELWPLQSEGAAALVTKECQRLAAQGARPEAPKRKWAKDGGDAPSPSKRPWARQENQEAKGESGMGCDSGASNSSSSSSNTTSSSGEASARLREEVQPSAPERLALDYIVPCMRYYGICVKDNFLGAVLGGRVLAEVEALKWGGRLRDGQLVSQRAIPPRSIRGDQIAWVEGHEPGCRSIGALMAHVDAVIRHCAGRLGNYVINGRTKAMVACYPGNGLGYVRHVDNPHGDGRCITCIYYLNQNWDVKVHGGLLQIFPEGRPVVANIEPLFDRLLIFWSDRRNPHEVKPAYATRYAITVWYFDAKERAAARDKYQLASGQKGVQVPVSQPTTPT.

Low complexity-rich tracts occupy residues 1–18 (MDSPCQPQALNQALPQLP) and 64–73 (TTATATTTTA). Disordered regions lie at residues 1-89 (MDSP…GELW) and 108-181 (AAQG…REEV). The Bipartite nuclear localization signal motif lies at 89–134 (WPLQSEGAAALVTKECQRLAAQGARPEAPKRKWAKDGGDAPSPSKR). The segment covering 115-126 (EAPKRKWAKDGG) has biased composition (basic and acidic residues). Ser130 carries the phosphoserine modification. Residues 154-174 (SGASNSSSSSSNTTSSSGEAS) show a composition bias toward low complexity. The interval 237-247 (VSQRAIPPRSI) is beta(2)beta(3) 'finger-like' loop. Residues 290–388 (GRTKAMVACY…RYAITVWYFD (99 aa)) enclose the Fe2OG dioxygenase domain. The Fe cation site is built by His309, Asp311, and His370. Arg379 serves as a coordination point for 2-oxoglutarate.

In terms of assembly, interacts with E3 ligase SIAH2. Interacts with LIMD1, WTIP and AJUBA. Fe(2+) is required as a cofactor. L-ascorbate serves as cofactor. Post-translationally, ubiquitinated by SIAH1 and/or SIAH2 in response to the unfolded protein response (UPR), leading to its degradation. As to expression, highly expressed in testis, expression was also detected in the heart brain, liver kidney and lung. Expression was lowest in spleen and skeletal muscle. Constitutively expressed during differentiation of C2C12 skeletal myocytes.

It localises to the nucleus. It catalyses the reaction L-prolyl-[protein] + 2-oxoglutarate + O2 = trans-4-hydroxy-L-prolyl-[protein] + succinate + CO2. The catalysed reaction is L-prolyl-[hypoxia-inducible factor alpha subunit] + 2-oxoglutarate + O2 = trans-4-hydroxy-L-prolyl-[hypoxia-inducible factor alpha subunit] + succinate + CO2. In terms of biological role, prolyl hydroxylase that mediates hydroxylation of proline residues in target proteins, such as ATF4, IKBKB, CEP192 and HIF1A. Target proteins are preferentially recognized via a LXXLAP motif. Cellular oxygen sensor that catalyzes, under normoxic conditions, the post-translational formation of 4-hydroxyproline in hypoxia-inducible factor (HIF) alpha proteins. Hydroxylates a specific proline found in each of the oxygen-dependent degradation (ODD) domains (N-terminal, NODD, and C-terminal, CODD) of HIF1A. Also hydroxylates HIF2A. Has a preference for the CODD site for both HIF1A and HIF2A. Hydroxylated HIFs are then targeted for proteasomal degradation via the von Hippel-Lindau ubiquitination complex. Under hypoxic conditions, the hydroxylation reaction is attenuated allowing HIFs to escape degradation resulting in their translocation to the nucleus, heterodimerization with HIF1B, and increased expression of hypoxy-inducible genes. EGLN2 is involved in regulating hypoxia tolerance and apoptosis in cardiac and skeletal muscle. Also regulates susceptibility to normoxic oxidative neuronal death. Links oxygen sensing to cell cycle and primary cilia formation by hydroxylating the critical centrosome component CEP192 which promotes its ubiquitination and subsequent proteasomal degradation. Hydroxylates IKBKB, mediating NF-kappa-B activation in hypoxic conditions. Also mediates hydroxylation of ATF4, leading to decreased protein stability of ATF4. The polypeptide is Prolyl hydroxylase EGLN2 (Mus musculus (Mouse)).